The following is a 276-amino-acid chain: Diacetylchitobiose uptake system permease protein DasC (276 aa).

The next 6 membrane-spanning stretches (helical) occupy residues 14–34 (TAVV…ATAF), 74–94 (LIVT…GSFA), 105–125 (GFIV…VIAI), 137–157 (SLVP…ILTL), 186–206 (VILP…FITA), and 241–261 (GATM…FVYL). Residues 70 to 261 (VSNSLIVTVC…IPILILFVYL (192 aa)) form the ABC transmembrane type-1 domain.

This sequence belongs to the binding-protein-dependent transport system permease family. As to quaternary structure, the complex is composed of two ATP-binding proteins (MsiK), two transmembrane proteins (DasB and DasC) and a solute-binding protein (DasA).

It localises to the cell membrane. In terms of biological role, part of the ABC transporter complex DasABC-MsiK involved in N,N'-diacetylchitobiose ((GlcNAc)2) uptake. Responsible for the translocation of the substrate across the membrane. The chain is Diacetylchitobiose uptake system permease protein DasC from Streptomyces coelicolor (strain ATCC BAA-471 / A3(2) / M145).